Here is a 225-residue protein sequence, read N- to C-terminus: MAEAKPAPEKEAAAKTESVPVETEGEGPSVKEGSTSLVSIDEYLAAGVHIGTQQKTQDMMRFVYRVRTDGLYVLDIQSTDERIRVAAKLLSHYDPSRILVVSSRQYGQHPARMFSRALSTKSMLGRFIPGLLTNPQIHGFFEPDIVIVTDPAGDAQVLKEASSIGVPIVALCDTNNLTSNVDLVIPTNNKGRKALSLVYWLLAREVSRLNSTPFNYELTDFETPL.

The segment covering 1-14 (MAEAKPAPEKEAAA) has biased composition (basic and acidic residues). The disordered stretch occupies residues 1 to 33 (MAEAKPAPEKEAAAKTESVPVETEGEGPSVKEG).

It belongs to the universal ribosomal protein uS2 family.

The polypeptide is Small ribosomal subunit protein uS2 (Methanosarcina barkeri (strain Fusaro / DSM 804)).